Consider the following 378-residue polypeptide: 3-dehydroquinate synthase (378 aa).

Residues 115 to 119 (GVVGD), 139 to 140 (TS), Lys152, and Lys161 each bind NAD(+). Residues Glu194, His256, and His275 each coordinate Zn(2+).

This sequence belongs to the sugar phosphate cyclases superfamily. Dehydroquinate synthase family. Co(2+) serves as cofactor. Zn(2+) is required as a cofactor. The cofactor is NAD(+).

It is found in the cytoplasm. The enzyme catalyses 7-phospho-2-dehydro-3-deoxy-D-arabino-heptonate = 3-dehydroquinate + phosphate. It functions in the pathway metabolic intermediate biosynthesis; chorismate biosynthesis; chorismate from D-erythrose 4-phosphate and phosphoenolpyruvate: step 2/7. Its function is as follows. Catalyzes the conversion of 3-deoxy-D-arabino-heptulosonate 7-phosphate (DAHP) to dehydroquinate (DHQ). The sequence is that of 3-dehydroquinate synthase from Brucella suis (strain ATCC 23445 / NCTC 10510).